The sequence spans 304 residues: Non-specific ribonucleoside hydrolase RihC (304 aa).

H233 is a catalytic residue.

This sequence belongs to the IUNH family. RihC subfamily.

Functionally, hydrolyzes both purine and pyrimidine ribonucleosides with a broad-substrate specificity. In Escherichia coli O17:K52:H18 (strain UMN026 / ExPEC), this protein is Non-specific ribonucleoside hydrolase RihC.